A 173-amino-acid polypeptide reads, in one-letter code: Ribulose bisphosphate carboxylase small subunit, chloroplastic 1 (173 aa).

A chloroplast-targeting transit peptide spans 1–49 (MASIPATVATVAQANMVAPFTGLKANAAFPVTKKVNDFSTLPSNGGRVQ).

This sequence belongs to the RuBisCO small chain family. Heterohexadecamer of 8 large and 8 small subunits.

The protein localises to the plastid. Its subcellular location is the chloroplast. RuBisCO catalyzes two reactions: the carboxylation of D-ribulose 1,5-bisphosphate, the primary event in carbon dioxide fixation, as well as the oxidative fragmentation of the pentose substrate. Both reactions occur simultaneously and in competition at the same active site. Although the small subunit is not catalytic it is essential for maximal activity. In Flaveria pringlei, this protein is Ribulose bisphosphate carboxylase small subunit, chloroplastic 1.